Reading from the N-terminus, the 217-residue chain is Large ribosomal subunit protein uL1 (217 aa).

At tyrosine 11 the chain carries Phosphotyrosine. N6-acetyllysine is present on residues lysine 91 and lysine 106. The residue at position 118 (lysine 118) is an N6-acetyllysine; alternate. Residue lysine 118 forms a Glycyl lysine isopeptide (Lys-Gly) (interchain with G-Cter in SUMO1); alternate linkage. Residue lysine 118 forms a Glycyl lysine isopeptide (Lys-Gly) (interchain with G-Cter in SUMO2); alternate linkage. Lysine 161 is covalently cross-linked (Glycyl lysine isopeptide (Lys-Gly) (interchain with G-Cter in SUMO2)).

Belongs to the universal ribosomal protein uL1 family. In terms of assembly, component of the large ribosomal subunit.

It localises to the cytoplasm. In terms of biological role, component of the large ribosomal subunit. The ribosome is a large ribonucleoprotein complex responsible for the synthesis of proteins in the cell. This chain is Large ribosomal subunit protein uL1 (RPL10A), found in Oryctolagus cuniculus (Rabbit).